The primary structure comprises 296 residues: Glycine N-acyltransferase-like protein (296 aa).

The residue at position 41 (Lys41) is an N6-acetyllysine; alternate. Residue Lys41 is modified to N6-succinyllysine; alternate. Lys43 carries the post-translational modification N6-acetyllysine. N6-acetyllysine; alternate is present on Lys48. N6-succinyllysine; alternate is present on Lys48. An N6-acetyllysine mark is found at Lys80 and Lys83. 2 positions are modified to N6-acetyllysine; alternate: Lys183 and Lys256. N6-succinyllysine; alternate is present on residues Lys183 and Lys256.

The protein belongs to the glycine N-acyltransferase family.

It localises to the mitochondrion. It catalyses the reaction an acyl-CoA + glycine = an N-acylglycine + CoA + H(+). Mitochondrial acyltransferase which transfers the acyl group to the N-terminus of glycine. Can conjugate a multitude of substrates to form a variety of N-acylglycines. The sequence is that of Glycine N-acyltransferase-like protein (Gm4952) from Mus musculus (Mouse).